Here is a 344-residue protein sequence, read N- to C-terminus: Photosystem II protein D1 (344 aa).

At Thr-2 the chain carries N-acetylthreonine. Position 2 is a phosphothreonine (Thr-2). 3 consecutive transmembrane segments (helical) span residues 29-46 (YIGW…TATS), 118-133 (HFFL…EWEL), and 142-156 (WIAV…AATA). Residue His-118 participates in chlorophyll a binding. Residue Tyr-126 coordinates pheophytin a. Asp-170 and Glu-189 together coordinate [CaMn4O5] cluster. The helical transmembrane segment at 197–218 (FHMLGVAGVFGGSLFSAMHGSL) threads the bilayer. A chlorophyll a-binding site is contributed by His-198. Residues His-215 and 264-265 (SF) each bind a quinone. His-215 serves as a coordination point for Fe cation. A Fe cation-binding site is contributed by His-272. A helical transmembrane segment spans residues 274 to 288 (FLAAWPVIGIWFTAL). Residues His-332, Glu-333, Asp-342, and Ala-344 each coordinate [CaMn4O5] cluster.

Belongs to the reaction center PufL/M/PsbA/D family. PSII is composed of 1 copy each of membrane proteins PsbA, PsbB, PsbC, PsbD, PsbE, PsbF, PsbH, PsbI, PsbJ, PsbK, PsbL, PsbM, PsbT, PsbX, PsbY, PsbZ, Psb30/Ycf12, at least 3 peripheral proteins of the oxygen-evolving complex and a large number of cofactors. It forms dimeric complexes. The cofactor is The D1/D2 heterodimer binds P680, chlorophylls that are the primary electron donor of PSII, and subsequent electron acceptors. It shares a non-heme iron and each subunit binds pheophytin, quinone, additional chlorophylls, carotenoids and lipids. D1 provides most of the ligands for the Mn4-Ca-O5 cluster of the oxygen-evolving complex (OEC). There is also a Cl(-1) ion associated with D1 and D2, which is required for oxygen evolution. The PSII complex binds additional chlorophylls, carotenoids and specific lipids.. Tyr-161 forms a radical intermediate that is referred to as redox-active TyrZ, YZ or Y-Z.

The protein localises to the plastid. It localises to the chloroplast thylakoid membrane. It carries out the reaction 2 a plastoquinone + 4 hnu + 2 H2O = 2 a plastoquinol + O2. Photosystem II (PSII) is a light-driven water:plastoquinone oxidoreductase that uses light energy to abstract electrons from H(2)O, generating O(2) and a proton gradient subsequently used for ATP formation. It consists of a core antenna complex that captures photons, and an electron transfer chain that converts photonic excitation into a charge separation. The D1/D2 (PsbA/PsbD) reaction center heterodimer binds P680, the primary electron donor of PSII as well as several subsequent electron acceptors. In Pleurastrum terricola (Filamentous green alga), this protein is Photosystem II protein D1.